We begin with the raw amino-acid sequence, 503 residues long: 5'-3' exonuclease PLD4 (503 aa).

The Cytoplasmic segment spans residues 1-36; that stretch reads MDKKKEHPEMRIPLQTAVEVSDWPCSTSHDPHSGLG. A signal-anchor for type II membrane protein membrane pass occupies residues 37-57; it reads MVLGMLAVLGLSSVTLILFLW. At 58 to 503 the chain is on the lumenal side; the sequence is QGATSFTSHR…RQVPSQDCVW (446 aa). N-linked (GlcNAc...) asparagine glycosylation is found at Asn89, Asn148, and Asn169. The cysteines at positions 92 and 248 are disulfide-linked. The region spanning 207–234 is the PLD phosphodiesterase 1 domain; the sequence is TGGVLHSKFWVVDGRHIYVGSANMDWRS. Residues His212, Lys214, and Asp219 contribute to the active site. His212 (proton donor) is an active-site residue. 4 N-linked (GlcNAc...) asparagine glycosylation sites follow: Asn247, Asn279, Asn415, and Asn425. An intrachain disulfide couples Cys377 to Cys501. Residues 421–447 form the PLD phosphodiesterase 2 domain; it reads FSRVNHSKFMVTDKTAYVGTSNWSEDY. Active-site residues include His426, Lys428, and Asp433. The active-site Nucleophile is His426. N-linked (GlcNAc...) asparagine glycosylation occurs at Asn442.

This sequence belongs to the phospholipase D family. Post-translationally, highly N-glycosylated. In terms of tissue distribution, enriched in the white matter of early postnatal brains, as well as in splenic marginal zone cells. Highly expressed in dendritic cells (DCs) and other myeloid cells, with lower expression in B cell.

The protein localises to the endoplasmic reticulum membrane. It localises to the golgi apparatus. It is found in the trans-Golgi network membrane. Its subcellular location is the nucleus. The protein resides in the early endosome. The protein localises to the cytoplasmic vesicle. It localises to the phagosome. It is found in the lysosome. It carries out the reaction Exonucleolytic cleavage in the 5'- to 3'-direction to yield nucleoside 3'-phosphates.. The enzyme catalyses a 5'-end 5'-dephospho-ribonucleotidyl-ribonucleotide-RNA + H2O = a ribonucleoside 3'-phosphate + a 5'-end dephospho-ribonucleoside-RNA + H(+). It catalyses the reaction a ribonucleoside 3'-phosphate-2'-3'-cyclophospho-GMP + H2O = a ribonucleoside 3'-phosphate + 2',3'-cyclophospho-GMP + H(+). The catalysed reaction is a 5'-end 5'-dephospho-2'-deoxyribonucleotidyl-2'-deoxyribonucleotide in single-stranded DNA + H2O = a 5'-end dephospho-2'-deoxyribonucleoside in single-stranded DNA + a 2'-deoxyribonucleoside 3'-phosphate + H(+). It carries out the reaction a 5'-end 5'-phospho-2'-deoxyribonucleotide in single-stranded DNA + H2O = a 5'-end 5'-dephospho-2'-deoxyribonucleotide in single-stranded DNA + phosphate. The enzyme catalyses a 3-lyso-sn-glycero-1-phospho-(3'-acyl-1'-sn-glycerol) + a 1-acyl-sn-glycerol = a 3-acyl-sn-glycero-1-phospho-(3'-acyl-1'-sn-glycerol) + glycerol. It catalyses the reaction 3-lyso-sn-glycero-1-phospho-(3'-(9Z-octadecenoyl)-1'-sn-glycerol) + 1-(9Z-octadecenoyl)-sn-glycerol = 3-(9Z-octadecenoyl)-sn-glycero-1-phospho-(3'-(9Z-octadecenoyl)-1'-sn-glycerol) + glycerol. The exonuclease activity toward ssDNA substrate is Ca(2+) and Mg(2+)-independent, but it is inhibited by Fe(2+), Cu(2+) and to a lesser extent Zn(2+) ions. Functionally, 5'-&gt;3' exonuclease that hydrolyzes the phosphodiester bond of single-stranded DNA (ssDNA) and RNA molecules to form nucleoside 3'-monophosphates and 5'-end 5'-hydroxy deoxyribonucleotide/ribonucleotide fragments. Partially redundant with PLD4, can cleave all four nucleotides displaying higher efficiency for ssDNA and RNA fragments initiated with uridine and guanosine residues and lower efficiency for cytidine-initiated substrates. As a result, it does not always degrade polynucleotides to the single nucleotide level, it can stall at specific sites sparing certain fragments from exonucleolytic degradation. Processes self and pathogenic ssDNA and RNA molecules that reach the endolysosomal compartment via phagocytosis or autophagy and may serve as 'danger' signals for recognition by innate immune receptors such as toll-like receptors (TLRs). Degrades mitochondrial CpG-rich ssDNA fragments to prevent TLR9 activation and autoinflammatory response, but it can cleave viral RNA to generate ligands for TLR7 activation and initiate antiviral immune responses. In plasmacytoid dendritic cells, it cooperates with endonuclease RNASET2 to release 2',3'-cyclic guanosine monophosphate (2',3'-cGMP), a potent stimulatory ligand for TLR7. Produces 2',3'-cGMPs and cytidine-rich RNA fragments that occupy TLR7 ligand-binding pockets and trigger a signaling-competent state. Can exert polynucleotide phosphatase activity toward 5'-phosphorylated ssDNA substrates although at a slow rate. Transphosphatidylase that catalyzes the exchange with R to S stereo-inversion of the glycerol moiety between (S,R)-lysophosphatidylglycerol (LPG) and monoacylglycerol (MAG) substrates to yield (S,S)-bis(monoacylglycero)phosphate (BMP). Can synthesize a variety of (S,S)-BMPs representing the main phospholipid constituent of lysosomal intralumenal vesicle (ILV) membranes that bind acid hydrolases for lipid degradation. Regulates the homeostasis and interorganellar communication of the endolysosomal system with an overall impact on cellular removal of dysfunctional organelles via autophagy as well as proper protein and lipid turnover. May play a role in myotube formation in response to ER stress. In Mus musculus (Mouse), this protein is 5'-3' exonuclease PLD4.